The following is a 127-amino-acid chain: Apolipoprotein C-IV (127 aa).

The N-terminal stretch at Met1–Cys27 is a signal peptide. Asn63 carries N-linked (GlcNAc...) asparagine glycosylation.

Belongs to the apolipoprotein C4 family. Expressed by the liver and secreted in plasma.

The protein resides in the secreted. In terms of biological role, may participate in lipoprotein metabolism. The chain is Apolipoprotein C-IV (APOC4) from Homo sapiens (Human).